The chain runs to 151 residues: Small ribosomal subunit protein uS15 (151 aa).

The protein belongs to the universal ribosomal protein uS15 family.

This Anopheles gambiae (African malaria mosquito) protein is Small ribosomal subunit protein uS15 (RpS13).